The following is a 189-amino-acid chain: Sec-independent protein translocase protein TatB (189 aa).

Residues 1-21 (MFGVGIFEVLVILIVAVIALG) form a helical membrane-spanning segment. Positions 152-189 (TQKPQNSIDSINSKESSVDSLHSPSIVESTQSSSSKDS) are disordered. A compositionally biased stretch (polar residues) spans 153–189 (QKPQNSIDSINSKESSVDSLHSPSIVESTQSSSSKDS).

Belongs to the TatB family. The Tat system comprises two distinct complexes: a TatABC complex, containing multiple copies of TatA, TatB and TatC subunits, and a separate TatA complex, containing only TatA subunits. Substrates initially bind to the TatABC complex, which probably triggers association of the separate TatA complex to form the active translocon.

The protein localises to the cell inner membrane. Its function is as follows. Part of the twin-arginine translocation (Tat) system that transports large folded proteins containing a characteristic twin-arginine motif in their signal peptide across membranes. Together with TatC, TatB is part of a receptor directly interacting with Tat signal peptides. TatB may form an oligomeric binding site that transiently accommodates folded Tat precursor proteins before their translocation. The polypeptide is Sec-independent protein translocase protein TatB (Helicobacter hepaticus (strain ATCC 51449 / 3B1)).